The primary structure comprises 372 residues: Molybdopterin synthase catalytic subunit (372 aa).

Residues 101–102, lysine 117, and 124–126 contribute to the substrate site; these read HR and KKE.

Belongs to the MoaE family. MOCS2B subfamily. Heterotetramer; composed of 2 small (Mocs2A) and 2 large (Mocs2B) subunits.

The protein resides in the cytoplasm. It catalyses the reaction 2 [molybdopterin-synthase sulfur-carrier protein]-C-terminal-Gly-aminoethanethioate + cyclic pyranopterin phosphate + H2O = molybdopterin + 2 [molybdopterin-synthase sulfur-carrier protein]-C-terminal Gly-Gly + 2 H(+). The protein operates within cofactor biosynthesis; molybdopterin biosynthesis. In terms of biological role, catalytic subunit of the molybdopterin synthase complex, a complex that catalyzes the conversion of precursor Z into molybdopterin. Acts by mediating the incorporation of 2 sulfur atoms from thiocarboxylated Mocs2A into precursor Z to generate a dithiolene group. The chain is Molybdopterin synthase catalytic subunit from Drosophila willistoni (Fruit fly).